The primary structure comprises 377 residues: UPF0754 membrane protein YheB (377 aa).

The next 2 helical transmembrane spans lie at 1-21 (MGIA…GAVT) and 357-377 (YLGG…VILF).

Belongs to the UPF0754 family.

The protein localises to the cell membrane. The chain is UPF0754 membrane protein YheB (yheB) from Bacillus subtilis (strain 168).